Here is a 961-residue protein sequence, read N- to C-terminus: Lon protease homolog, mitochondrial (961 aa).

A mitochondrion-targeting transit peptide spans 1–67 (MAGGTGCVRL…SPAAAGHWRG (67 aa)). 2 disordered regions span residues 76 to 103 (GGGA…GSAG) and 220 to 262 (QLEV…VVVG). A Lon N-terminal domain is found at 125-371 (LPLIAVTRNP…KALSLLKKEF (247 aa)). The segment covering 235 to 244 (KLRKKPKRGK) has biased composition (basic residues). The segment covering 245-257 (KEAEEDGATKRPL) has biased composition (basic and acidic residues). 524 to 531 (GPPGVGKT) serves as a coordination point for ATP. The Lon proteolytic domain maps to 760-951 (VTPPGVVMGL…REIFDIAFPE (192 aa)). A compositionally biased stretch (basic and acidic residues) spans 784-801 (SLRRPRDRDSDKGDKDGS). The interval 784–803 (SLRRPRDRDSDKGDKDGSLE) is disordered. Active-site residues include Ser857 and Lys900.

The protein belongs to the peptidase S16 family. In terms of assembly, homohexamer. Organized in a ring with a central cavity. The ATP-binding and proteolytic domains (AP-domain) form a hexameric chamber, while the N-terminal domain is arranged as a trimer of dimers. DNA and RNA binding is stimulated by substrate and inhibited by ATP binding. Interacts with TWNK and mitochondrial DNA polymerase subunit POLG.

The protein resides in the mitochondrion matrix. The catalysed reaction is Hydrolysis of proteins in presence of ATP.. ATP-dependent serine protease that mediates the selective degradation of misfolded, unassembled or oxidatively damaged polypeptides as well as certain short-lived regulatory proteins in the mitochondrial matrix. Endogenous substrates include mitochondrial steroidogenic acute regulatory (StAR) protein, DELE1, helicase Twinkle (TWNK) and the large ribosomal subunit protein MRPL32/bL32m. MRPL32/bL32m is protected from degradation by LONP1 when it is bound to a nucleic acid (RNA), but TWNK is not. May also have a chaperone function in the assembly of inner membrane protein complexes. Participates in the regulation of mitochondrial gene expression and in the maintenance of the integrity of the mitochondrial genome. Binds to mitochondrial promoters and RNA in a single-stranded, site-specific, and strand-specific manner. May regulate mitochondrial DNA replication and/or gene expression using site-specific, single-stranded DNA binding to target the degradation of regulatory proteins binding to adjacent sites in mitochondrial promoters. This chain is Lon protease homolog, mitochondrial, found in Bos taurus (Bovine).